The chain runs to 161 residues: Endoribonuclease YbeY (161 aa).

Zn(2+) contacts are provided by His-120, His-124, and Asp-130.

Belongs to the endoribonuclease YbeY family. Zn(2+) serves as cofactor.

It localises to the cytoplasm. In terms of biological role, single strand-specific metallo-endoribonuclease involved in late-stage 70S ribosome quality control and in maturation of the 3' terminus of the 16S rRNA. In Chlamydia muridarum (strain MoPn / Nigg), this protein is Endoribonuclease YbeY.